We begin with the raw amino-acid sequence, 271 residues long: Shikimate dehydrogenase (NADP(+)) (271 aa).

Residues 16-18 and T63 contribute to the shikimate site; that span reads SRS. Catalysis depends on K67, which acts as the Proton acceptor. Positions 88 and 104 each coordinate shikimate. Residues 128 to 132, 152 to 157, and M215 contribute to the NADP(+) site; these read GAGGA and NRTASK. Y217 provides a ligand contact to shikimate. G238 contributes to the NADP(+) binding site.

This sequence belongs to the shikimate dehydrogenase family. As to quaternary structure, homodimer.

It catalyses the reaction shikimate + NADP(+) = 3-dehydroshikimate + NADPH + H(+). The protein operates within metabolic intermediate biosynthesis; chorismate biosynthesis; chorismate from D-erythrose 4-phosphate and phosphoenolpyruvate: step 4/7. Functionally, involved in the biosynthesis of the chorismate, which leads to the biosynthesis of aromatic amino acids. Catalyzes the reversible NADPH linked reduction of 3-dehydroshikimate (DHSA) to yield shikimate (SA). The protein is Shikimate dehydrogenase (NADP(+)) of Chromohalobacter salexigens (strain ATCC BAA-138 / DSM 3043 / CIP 106854 / NCIMB 13768 / 1H11).